The chain runs to 186 residues: Peptidyl-tRNA hydrolase (186 aa).

Tyr-14 lines the tRNA pocket. His-19 acts as the Proton acceptor in catalysis. Positions 64, 66, and 112 each coordinate tRNA.

The protein belongs to the PTH family. In terms of assembly, monomer.

Its subcellular location is the cytoplasm. The catalysed reaction is an N-acyl-L-alpha-aminoacyl-tRNA + H2O = an N-acyl-L-amino acid + a tRNA + H(+). In terms of biological role, hydrolyzes ribosome-free peptidyl-tRNAs (with 1 or more amino acids incorporated), which drop off the ribosome during protein synthesis, or as a result of ribosome stalling. Functionally, catalyzes the release of premature peptidyl moieties from peptidyl-tRNA molecules trapped in stalled 50S ribosomal subunits, and thus maintains levels of free tRNAs and 50S ribosomes. In Bacillus cytotoxicus (strain DSM 22905 / CIP 110041 / 391-98 / NVH 391-98), this protein is Peptidyl-tRNA hydrolase.